Reading from the N-terminus, the 513-residue chain is MDMLNLTLKPGCLSLNQLRQVSRSPINLSLDASAIPAIEDSTQVVERVIAEDRTVYGINTGFGLLANTRIAPEDLETLQRSIVLSHAAGIGEFMADETVRLMMVLKINSLSRGYSGIRLNVIQMLIDLVNAQVYPCVPQKGSVGASGDLAPLAHMSTVLLGEGQARHNGKIISGLEALKIAGLEPITLAPKEGLALLNGTQASTAFALEGLFIAEDLFASATVCGAMSVEAALGSRRPFDPRIHRVRGHRSQMDSAMAYRHLLDTSSEIGQSHSNCEKVQDPYSLRCQPQVMGACLQQIRNSAEILLVESNSVSDNPLVFAEDDDIISGGNFHAEPVAMAADNLALAIAEIGSLSERRMALLIDSALSKLPPFLVDNGGVNSGFMIAQVTSAALASENKTLAHPASVDSLPTSANQEDHVSMATFAARRLREMGENTRGILAVEYLSAAQGLDFRAPHKSSPRIEQAKQMLREKVSFYDKDRYFAPDIEKANSLLKLAVHNVLMPEALLPSVL.

The segment at residues 145 to 147 is a cross-link (5-imidazolinone (Ala-Gly)); that stretch reads ASG. Ser146 carries the 2,3-didehydroalanine (Ser) modification.

This sequence belongs to the PAL/histidase family. In terms of processing, contains an active site 4-methylidene-imidazol-5-one (MIO), which is formed autocatalytically by cyclization and dehydration of residues Ala-Ser-Gly.

It is found in the cytoplasm. It carries out the reaction L-histidine = trans-urocanate + NH4(+). Its pathway is amino-acid degradation; L-histidine degradation into L-glutamate; N-formimidoyl-L-glutamate from L-histidine: step 1/3. The protein is Histidine ammonia-lyase of Vibrio vulnificus (strain YJ016).